A 133-amino-acid polypeptide reads, in one-letter code: Large-conductance mechanosensitive channel (133 aa).

2 helical membrane-spanning segments follow: residues 14–34 (VVDLAVAVVIGAAFGTVVTTL) and 73–93 (FITVLLNFVIIAAAIYFMVVV).

It belongs to the MscL family. Homopentamer.

Its subcellular location is the cell membrane. Channel that opens in response to stretch forces in the membrane lipid bilayer. May participate in the regulation of osmotic pressure changes within the cell. The polypeptide is Large-conductance mechanosensitive channel (Renibacterium salmoninarum (strain ATCC 33209 / DSM 20767 / JCM 11484 / NBRC 15589 / NCIMB 2235)).